Reading from the N-terminus, the 273-residue chain is Homeobox protein HMX2 (273 aa).

The disordered stretch occupies residues 1–152; the sequence is MGSKEDAGKG…RQAGAAKKKT (152 aa). A compositionally biased stretch (gly residues) spans 93 to 102; that stretch reads KGSGGSGPGG. Basic and acidic residues predominate over residues 114–123; that stretch reads SDFKEEKERL. Residues 149 to 208 constitute a DNA-binding region (homeobox); that stretch reads KKKTRTVFSRSQVYQLESTFDMKRYLSSSERACLASSLQLTETQVKTWFQNRRNKWKRQL.

It belongs to the HMX homeobox family.

The protein localises to the nucleus. Its function is as follows. Transcription factor involved in specification of neuronal cell types and which is required for inner ear and hypothalamus development. The chain is Homeobox protein HMX2 (HMX2) from Homo sapiens (Human).